A 97-amino-acid polypeptide reads, in one-letter code: NELL2-interacting cell ontogeny regulator 1 (97 aa).

The N-terminal stretch at 1–35 (MAPLPPCGPPRSPPPRLLLLLLLLSATLLGAPARA) is a signal peptide.

The protein belongs to the NICOL family. As to quaternary structure, interacts with NELL2; triggers epididymal differentiation. Interacts with cell surface receptor TFRC; the interaction mediates uptake of NICOL1 into fibroblasts.

The protein resides in the secreted. It is found in the cytoplasm. Its subcellular location is the perinuclear region. Functionally, mRNA-binding protein which interacts with a range of target mRNAs including SERPINE1, ACTA2, CCN2 and COL4A1 and may promote extracellular matrix production. Binds to the 3'-UTR of SERPINE1 mRNA and stabilizes the mRNA, possibly by competing for binding with SERBP1 and preventing SERBP1-mediated mRNA degradation. Also binds to the 3'-UTR of ACTA2. Testis-derived lumicrine factor that triggers epididymal differentiation and sperm maturation. The polypeptide is NELL2-interacting cell ontogeny regulator 1 (Bos taurus (Bovine)).